Here is a 416-residue protein sequence, read N- to C-terminus: Multifunctional CCA protein (416 aa).

ATP contacts are provided by glycine 8 and arginine 11. Positions 8 and 11 each coordinate CTP. Residues glutamate 21 and aspartate 23 each coordinate Mg(2+). The ATP site is built by arginine 91, arginine 137, and arginine 140. CTP-binding residues include arginine 91, arginine 137, and arginine 140. In terms of domain architecture, HD spans 228–329; that stretch reads TGIHTLMVLK…LKLFDAVDAW (102 aa).

The protein belongs to the tRNA nucleotidyltransferase/poly(A) polymerase family. Bacterial CCA-adding enzyme type 1 subfamily. In terms of assembly, monomer. Can also form homodimers and oligomers. Mg(2+) serves as cofactor. It depends on Ni(2+) as a cofactor.

The catalysed reaction is a tRNA precursor + 2 CTP + ATP = a tRNA with a 3' CCA end + 3 diphosphate. It catalyses the reaction a tRNA with a 3' CCA end + 2 CTP + ATP = a tRNA with a 3' CCACCA end + 3 diphosphate. Catalyzes the addition and repair of the essential 3'-terminal CCA sequence in tRNAs without using a nucleic acid template. Adds these three nucleotides in the order of C, C, and A to the tRNA nucleotide-73, using CTP and ATP as substrates and producing inorganic pyrophosphate. tRNA 3'-terminal CCA addition is required both for tRNA processing and repair. Also involved in tRNA surveillance by mediating tandem CCA addition to generate a CCACCA at the 3' terminus of unstable tRNAs. While stable tRNAs receive only 3'-terminal CCA, unstable tRNAs are marked with CCACCA and rapidly degraded. This Photorhabdus laumondii subsp. laumondii (strain DSM 15139 / CIP 105565 / TT01) (Photorhabdus luminescens subsp. laumondii) protein is Multifunctional CCA protein.